The sequence spans 362 residues: Adenosine kinase (362 aa).

N-acetylalanine is present on Ala2. The short motif at 8–16 is the Nuclear localization signal element; sequence PKPKKLKVE. Asp35 lines the adenosine pocket. Ser49 lines the Mg(2+) pocket. The residue at position 77 (Tyr77) is a Phosphotyrosine. The Mg(2+) site is built by Asp147 and Asn148. Gln306 contributes to the adenosine binding site. Asp317 acts as the Proton acceptor in catalysis.

This sequence belongs to the carbohydrate kinase PfkB family. In terms of assembly, monomer. It depends on Mg(2+) as a cofactor. As to expression, widely expressed. Highest level in placenta, liver, muscle and kidney.

Its subcellular location is the nucleus. The protein localises to the cytoplasm. It carries out the reaction adenosine + ATP = AMP + ADP + H(+). It functions in the pathway purine metabolism; AMP biosynthesis via salvage pathway; AMP from adenosine: step 1/1. With respect to regulation, activity is inhibited by 5-iodotubercidin and 5'-amino-5'-deoxyadenosine. Catalyzes the phosphorylation of the purine nucleoside adenosine at the 5' position in an ATP-dependent manner. Serves as a potential regulator of concentrations of extracellular adenosine and intracellular adenine nucleotides. This chain is Adenosine kinase, found in Homo sapiens (Human).